The chain runs to 310 residues: L-lactate dehydrogenase (310 aa).

Residues valine 11, aspartate 32, tyrosine 62, and 76-77 contribute to the NAD(+) site; that span reads GV. Substrate is bound by residues glutamine 79, arginine 85, and 117–120; that span reads NPVD. Residues 115-117 and serine 140 contribute to the NAD(+) site; that span reads ATN. 145 to 148 lines the substrate pocket; sequence DTAR. Arginine 150 and histidine 165 together coordinate beta-D-fructose 1,6-bisphosphate. Residue histidine 172 is the Proton acceptor of the active site. Tyrosine 218 bears the Phosphotyrosine mark. A substrate-binding site is contributed by threonine 227.

Belongs to the LDH/MDH superfamily. LDH family. Homotetramer.

It is found in the cytoplasm. It carries out the reaction (S)-lactate + NAD(+) = pyruvate + NADH + H(+). It functions in the pathway fermentation; pyruvate fermentation to lactate; (S)-lactate from pyruvate: step 1/1. Activated by citrate at pH 5. Allosterically activated by fructose 1,6-bisphosphate (FBP) at pH from 5.8 to 7.2. Catalyzes the conversion of lactate to pyruvate. The protein is L-lactate dehydrogenase of Thermus aquaticus.